The primary structure comprises 148 residues: UPF0178 protein EF_0842 (148 aa).

This sequence belongs to the UPF0178 family.

The sequence is that of UPF0178 protein EF_0842 from Enterococcus faecalis (strain ATCC 700802 / V583).